The sequence spans 541 residues: 2-succinyl-5-enolpyruvyl-6-hydroxy-3-cyclohexene-1-carboxylate synthase (541 aa).

The protein belongs to the TPP enzyme family. MenD subfamily. In terms of assembly, homodimer. The cofactor is Mg(2+). Mn(2+) serves as cofactor. It depends on thiamine diphosphate as a cofactor.

It catalyses the reaction isochorismate + 2-oxoglutarate + H(+) = 5-enolpyruvoyl-6-hydroxy-2-succinyl-cyclohex-3-ene-1-carboxylate + CO2. Its pathway is quinol/quinone metabolism; 1,4-dihydroxy-2-naphthoate biosynthesis; 1,4-dihydroxy-2-naphthoate from chorismate: step 2/7. The protein operates within quinol/quinone metabolism; menaquinone biosynthesis. Its function is as follows. Catalyzes the thiamine diphosphate-dependent decarboxylation of 2-oxoglutarate and the subsequent addition of the resulting succinic semialdehyde-thiamine pyrophosphate anion to isochorismate to yield 2-succinyl-5-enolpyruvyl-6-hydroxy-3-cyclohexene-1-carboxylate (SEPHCHC). The chain is 2-succinyl-5-enolpyruvyl-6-hydroxy-3-cyclohexene-1-carboxylate synthase from Leuconostoc citreum (strain KM20).